The following is a 186-amino-acid chain: Ribosome maturation factor RimM (186 aa).

In terms of domain architecture, PRC barrel spans 100–182 (NEGEYHVSDL…RIEINPPVGL (83 aa)).

This sequence belongs to the RimM family. Binds ribosomal protein uS19.

It localises to the cytoplasm. In terms of biological role, an accessory protein needed during the final step in the assembly of 30S ribosomal subunit, possibly for assembly of the head region. Essential for efficient processing of 16S rRNA. May be needed both before and after RbfA during the maturation of 16S rRNA. It has affinity for free ribosomal 30S subunits but not for 70S ribosomes. The chain is Ribosome maturation factor RimM from Rippkaea orientalis (strain PCC 8801 / RF-1) (Cyanothece sp. (strain PCC 8801)).